We begin with the raw amino-acid sequence, 269 residues long: Octanoyltransferase LipM (269 aa).

A BPL/LPL catalytic domain is found at 31-239 (NHGAPVLRFY…GFSEGFEVNF (209 aa)). The active-site Acyl-thioester intermediate is Cys-141.

Belongs to the octanoyltransferase LipM family. In terms of assembly, monomer.

It catalyses the reaction octanoyl-[ACP] + L-lysyl-[protein] = N(6)-octanoyl-L-lysyl-[protein] + holo-[ACP] + H(+). It functions in the pathway protein modification; protein lipoylation via endogenous pathway; protein N(6)-(lipoyl)lysine from octanoyl-[acyl-carrier-protein]. Its function is as follows. Catalyzes the transfer of endogenously produced octanoic acid from octanoyl-acyl-carrier-protein onto the lipoyl domain of GcvH, an intermediate carrier during protein lipoylation. In Carboxydothermus hydrogenoformans (strain ATCC BAA-161 / DSM 6008 / Z-2901), this protein is Octanoyltransferase LipM.